Here is a 179-residue protein sequence, read N- to C-terminus: Large ribosomal subunit protein uL5 (179 aa).

Belongs to the universal ribosomal protein uL5 family. As to quaternary structure, part of the 50S ribosomal subunit; part of the 5S rRNA/L5/L18/L25 subcomplex. Contacts the 5S rRNA and the P site tRNA. Forms a bridge to the 30S subunit in the 70S ribosome.

This is one of the proteins that bind and probably mediate the attachment of the 5S RNA into the large ribosomal subunit, where it forms part of the central protuberance. In the 70S ribosome it contacts protein S13 of the 30S subunit (bridge B1b), connecting the 2 subunits; this bridge is implicated in subunit movement. Contacts the P site tRNA; the 5S rRNA and some of its associated proteins might help stabilize positioning of ribosome-bound tRNAs. This is Large ribosomal subunit protein uL5 from Aromatoleum aromaticum (strain DSM 19018 / LMG 30748 / EbN1) (Azoarcus sp. (strain EbN1)).